Here is a 121-residue protein sequence, read N- to C-terminus: Colipase-like protein 1 (121 aa).

Residues 1-23 form the signal peptide; sequence MMLPQWLLLLFLLFFFLFLLTRG. Intrachain disulfides connect cysteine 39–cysteine 50, cysteine 45–cysteine 61, cysteine 49–cysteine 83, cysteine 71–cysteine 91, and cysteine 85–cysteine 107.

This sequence belongs to the colipase family. Exclusively expressed in epididymis, in the corpus region.

The protein resides in the secreted. This chain is Colipase-like protein 1 (CLPSL1), found in Homo sapiens (Human).